The primary structure comprises 147 residues: UPF0310 protein in gntR 5'region (147 aa).

The protein belongs to the UPF0310 family.

The chain is UPF0310 protein in gntR 5'region (oug) from Bacillus licheniformis.